Reading from the N-terminus, the 306-residue chain is Diterpene cyclase eriG (306 aa).

2 helical membrane passes run 13–33 (IFFGFSWRDWSTTIIPGSIFA) and 43–63 (ATLVKNYLFLVTWLTPYIYFF). Asn-64 is a glycosylation site (N-linked (GlcNAc...) asparagine). The next 4 membrane-spanning stretches (helical) occupy residues 115–135 (FLPETLCWIATVAFLCLTSYG), 161–181 (IAPATPTSDAWVYAVSVWAGL), 213–233 (LIITFFALPAACWVLSLAGIF), and 265–285 (MFYTYIFCLILAFCALDGLGL).

The protein belongs to the UbiA prenyltransferase family. It depends on Mg(2+) as a cofactor.

The protein resides in the membrane. The catalysed reaction is (2E,6E,10E)-geranylgeranyl diphosphate = (-)-cyatha-3,12-diene + diphosphate. It participates in secondary metabolite biosynthesis. With respect to regulation, EDTA completely blocks the reaction. Its function is as follows. Diterpene cyclase; part of the gene cluster that mediates the biosynthesis of erinacines, cyathane-xylosides that show unique biological activities, including leishmanicidal activity, stimulating activity for nerve growth-factor synthesis, and agonistic activity toward the kappa opioid receptor. Within the pathway, eriG acts as a diterpene cyclase that converts geranylgeranyl diphosphate (GGPP) into cyatha-3,12-diene. EriG is unable to use geranyl diphosphate (GPP) or farnesyl diphosphate (FPP) as substrates. The first step of the erinacines biosynthesis pathway is catalyzed by the geranylgeranyl diphosphate (GGPP) synthase eriE via conversion of farnesyl pyrophosphate and isopentyl pyrophosphate into geranylgeranyl pyrophosphate (GGPP). GGPP is then substrate of the diterpene cyclase eriG for the production of cyatha-3,12-diene. The cytochrome P450 monooxygenase eriI then hydroxylates cyatha-3,12-diene at C-14 of the seven-membered ring to produce erinacol, which is further hydroxylated at C-15 by the cytochrome P450 monooxygenase eriC to yield cyathadiol. The cytochrome P450 monooxygenase eriA then catalyzes C-11 hydroxylation in the presence of the short chain dehydrogenase/reductase (SDR) eriH, which leads to the production of cyathatriol. The acetyltransferase eriL converts cyathatriol into 11-O-acetyl-cyathatriol. The SDR eriH catalyzes further oxidation of 11-O-acetyl-cyathatriol into 1-O-acetylcyathin A3. Finally, the glycosyl transferase eriJ tranfers xylose from UDP-xylose onto C-14 of 11-O-acetyl-cyathatriol to form eracine Q. EriJ is also able to convert 11-O-acetyl-cyathatriol to eracine Q2 by using UDP-D-glucose as cosubstrate, but at a lower rate. The polypeptide is Diterpene cyclase eriG (Hericium erinaceus (Lion's mane mushroom)).